Consider the following 700-residue polypeptide: Polyribonucleotide nucleotidyltransferase (700 aa).

Asp491 and Asp497 together coordinate Mg(2+). The 60-residue stretch at 558-617 (PNYAVIEINPDKIRDVIGKGGATIRQLTEETGAVIDIDDAGTIRIFGENKAATKAAIAKI) folds into the KH domain. Residues 627 to 695 (GKTYEGTVAR…NRGRIKLTMK (69 aa)) form the S1 motif domain.

This sequence belongs to the polyribonucleotide nucleotidyltransferase family. Component of the RNA degradosome, which is a multiprotein complex involved in RNA processing and mRNA degradation. Mg(2+) is required as a cofactor.

Its subcellular location is the cytoplasm. The enzyme catalyses RNA(n+1) + phosphate = RNA(n) + a ribonucleoside 5'-diphosphate. Involved in mRNA degradation. Catalyzes the phosphorolysis of single-stranded polyribonucleotides processively in the 3'- to 5'-direction. This chain is Polyribonucleotide nucleotidyltransferase, found in Psychrobacter arcticus (strain DSM 17307 / VKM B-2377 / 273-4).